Here is a 475-residue protein sequence, read N- to C-terminus: MSPKTETKAGVGFKAGVKDYKLTYYTPDYETKDTDILAAFRVTPQPGVPAEEAGAAVAAESSTGTWTTVWTDGLTSLDRYKGRCYHIEPVAGEESQFIAYVAYPLDLFEEGSVTNMFTSIVGNVFGFKALRALRLEDLRIPPAYTKTFLGPPHGIQVERDKLNKYGRPLLGCTIKPKLGLSAKNYGRAVYECLRGGLDFTKDDENVNSQPFMRWRDRFLFCAEAIFKSQAETGEIKGHYLNATAGTCEEMIKRAVFARELGVPIVMHDYLTGGFTANTSLAHYCRDNGLLLHIHRAMHAVIDRQKNHGMHFRVLAKALRMSGGDHIHAGTVVGKLEGEREITLGFVDLLRDDFIEKDRSRGIYFTQDWVSMPGVLPVASGGIHVWHMPALTEIFGDDSVLQFGGGTLGHPWGNAPGAVANRVALEACVQARNEGRNLAREGNEIIREASKWSPELAAACEVWKEIKFEFEAMDTL.

Residues 1-2 constitute a propeptide that is removed on maturation; the sequence is MS. At Pro3 the chain carries N-acetylproline. Lys14 carries the post-translational modification N6,N6,N6-trimethyllysine. Substrate contacts are provided by Asn123 and Thr173. Lys175 acts as the Proton acceptor in catalysis. Substrate is bound at residue Lys177. Residues Lys201, Asp203, and Glu204 each contribute to the Mg(2+) site. Lys201 carries the post-translational modification N6-carboxylysine. Catalysis depends on His294, which acts as the Proton acceptor. Positions 295, 327, and 379 each coordinate substrate.

It belongs to the RuBisCO large chain family. Type I subfamily. As to quaternary structure, heterohexadecamer of 8 large chains and 8 small chains; disulfide-linked. The disulfide link is formed within the large subunit homodimers. Mg(2+) serves as cofactor. Post-translationally, the disulfide bond which can form in the large chain dimeric partners within the hexadecamer appears to be associated with oxidative stress and protein turnover.

It localises to the plastid. Its subcellular location is the chloroplast. It carries out the reaction 2 (2R)-3-phosphoglycerate + 2 H(+) = D-ribulose 1,5-bisphosphate + CO2 + H2O. The enzyme catalyses D-ribulose 1,5-bisphosphate + O2 = 2-phosphoglycolate + (2R)-3-phosphoglycerate + 2 H(+). In terms of biological role, ruBisCO catalyzes two reactions: the carboxylation of D-ribulose 1,5-bisphosphate, the primary event in carbon dioxide fixation, as well as the oxidative fragmentation of the pentose substrate in the photorespiration process. Both reactions occur simultaneously and in competition at the same active site. In Calycanthus floridus var. glaucus (Eastern sweetshrub), this protein is Ribulose bisphosphate carboxylase large chain.